The chain runs to 76 residues: Putative defensin-like protein 62 (76 aa).

Positions methionine 1–glutamine 26 are cleaved as a signal peptide. 4 disulfides stabilise this stretch: cysteine 30/cysteine 71, cysteine 34/cysteine 57, cysteine 43/cysteine 69, and cysteine 47/cysteine 70.

It belongs to the DEFL family.

It localises to the secreted. This Arabidopsis thaliana (Mouse-ear cress) protein is Putative defensin-like protein 62.